Here is a 260-residue protein sequence, read N- to C-terminus: Uridylate kinase (260 aa).

Position 29–32 (29–32 (KLSG)) interacts with ATP. Residues 37 to 42 (GDLGYG) are involved in allosteric activation by GTP. UMP is bound at residue Gly71. Positions 72 and 76 each coordinate ATP. Residues Asp91 and 152 to 159 (SGNPFFTT) contribute to the UMP site. 3 residues coordinate ATP: Thr179, Tyr185, and Asp188.

Belongs to the UMP kinase family. As to quaternary structure, homohexamer.

Its subcellular location is the cytoplasm. The catalysed reaction is UMP + ATP = UDP + ADP. The protein operates within pyrimidine metabolism; CTP biosynthesis via de novo pathway; UDP from UMP (UMPK route): step 1/1. Its activity is regulated as follows. Allosterically activated by GTP. Inhibited by UTP. Catalyzes the reversible phosphorylation of UMP to UDP. This chain is Uridylate kinase, found in Synechocystis sp. (strain ATCC 27184 / PCC 6803 / Kazusa).